A 188-amino-acid chain; its full sequence is Elongation factor P (188 aa).

N6-(3,6-diaminohexanoyl)-5-hydroxylysine is present on lysine 34.

The protein belongs to the elongation factor P family. Post-translationally, may be beta-lysylated on the epsilon-amino group of Lys-34 by the combined action of EpmA and EpmB, and then hydroxylated on the C5 position of the same residue by EpmC (if this protein is present). Lysylation is critical for the stimulatory effect of EF-P on peptide-bond formation. The lysylation moiety may extend toward the peptidyltransferase center and stabilize the terminal 3-CCA end of the tRNA. Hydroxylation of the C5 position on Lys-34 may allow additional potential stabilizing hydrogen-bond interactions with the P-tRNA.

It is found in the cytoplasm. The protein operates within protein biosynthesis; polypeptide chain elongation. Involved in peptide bond synthesis. Alleviates ribosome stalling that occurs when 3 or more consecutive Pro residues or the sequence PPG is present in a protein, possibly by augmenting the peptidyl transferase activity of the ribosome. Modification of Lys-34 is required for alleviation. In Vibrio cholerae serotype O1 (strain ATCC 39541 / Classical Ogawa 395 / O395), this protein is Elongation factor P.